We begin with the raw amino-acid sequence, 263 residues long: 3-deoxy-manno-octulosonate cytidylyltransferase (263 aa).

This sequence belongs to the KdsB family.

Its subcellular location is the cytoplasm. It catalyses the reaction 3-deoxy-alpha-D-manno-oct-2-ulosonate + CTP = CMP-3-deoxy-beta-D-manno-octulosonate + diphosphate. It participates in nucleotide-sugar biosynthesis; CMP-3-deoxy-D-manno-octulosonate biosynthesis; CMP-3-deoxy-D-manno-octulosonate from 3-deoxy-D-manno-octulosonate and CTP: step 1/1. It functions in the pathway bacterial outer membrane biogenesis; lipopolysaccharide biosynthesis. Activates KDO (a required 8-carbon sugar) for incorporation into bacterial lipopolysaccharide in Gram-negative bacteria. In Burkholderia cenocepacia (strain HI2424), this protein is 3-deoxy-manno-octulosonate cytidylyltransferase.